Here is a 202-residue protein sequence, read N- to C-terminus: Casparian strip membrane protein 1 (202 aa).

The segment covering 1 to 13 has biased composition (polar residues); the sequence is MEKSESSTIQIAE. The interval 1–30 is disordered; that stretch reads MEKSESSTIQIAESSKDRKGKAPLLPPPVH. Topologically, residues 1 to 42 are cytoplasmic; it reads MEKSESSTIQIAESSKDRKGKAPLLPPPVHHERAAGYKRGVA. Residues 43 to 63 traverse the membrane as a helical segment; the sequence is IFDLILRISAATAALAATIVM. At 64–90 the chain is on the extracellular side; it reads GTTEQTLPFFTQFFQFRASYDDLPTFT. Residues 91 to 111 traverse the membrane as a helical segment; sequence FFVIAMAIVTGYLILSVPFSI. The Cytoplasmic portion of the chain corresponds to 112–130; it reads VCIARPVVAAPRILLILCD. The chain crosses the membrane as a helical span at residues 131–151; that stretch reads TLTVTLATSAAGASAAIVYLA. The Extracellular segment spans residues 152 to 177; that stretch reads HNGXSDANWLAICQQFNDFCQRVSGA. Residues 178–198 traverse the membrane as a helical segment; sequence VVAAFVSAVLLIFLVVLSAIV. Topologically, residues 199–202 are cytoplasmic; sequence LKKH.

The protein belongs to the Casparian strip membrane proteins (CASP) family. Homodimer and heterodimers.

Its subcellular location is the cell membrane. Functionally, regulates membrane-cell wall junctions and localized cell wall deposition. Required for establishment of the Casparian strip membrane domain (CSD) and the subsequent formation of Casparian strips, a cell wall modification of the root endodermis that determines an apoplastic barrier between the intraorganismal apoplasm and the extraorganismal apoplasm and prevents lateral diffusion. The polypeptide is Casparian strip membrane protein 1 (Triphysaria pusilla (Dwarf owl's-clover)).